The following is a 144-amino-acid chain: High mobility group B protein 2 (144 aa).

Composition is skewed to basic and acidic residues over residues 1-12 and 73-94; these read MKGAKSKTETRS and AGDK…KAEK. Disordered regions lie at residues 1–42, 57–94, and 106–144; these read MKGA…KRPA, KKEN…KAEK, and YNKK…EDDD. A DNA-binding region (HMG box) is located at residues 38–107; the sequence is PKRPASAFFV…EYEKNIKAYN (70 aa). Serine 125 is subject to Phosphoserine. Acidic residues predominate over residues 127-144; that stretch reads VNDEDDAEDGSEEEEDDD.

The protein belongs to the HMGB family. In terms of tissue distribution, mostly expressed in cotyledons, hypocotyls, leaves, and flowers (excluding pedicels), also present in roots and stems.

The protein resides in the nucleus. The protein localises to the cytoplasm. It is found in the cytosol. Its function is as follows. Binds preferentially double-stranded DNA. Confers sensitivity to salt and drought stresses. In Arabidopsis thaliana (Mouse-ear cress), this protein is High mobility group B protein 2 (HMGB2).